Consider the following 1388-residue polypeptide: Rho-associated protein kinase 2 (1388 aa).

Residues 1-27 (MSRPPPTGKMPGAPETAPGDGAGASRQ) form a disordered region. The 263-residue stretch at 92 to 354 (YDVVKVIGRG…VEEIRQHPFF (263 aa)) folds into the Protein kinase domain. ATP is bound by residues 98–106 (IGRGAFGEV) and Lys-121. The active-site Proton acceptor is Asp-214. The AGC-kinase C-terminal domain maps to 357 to 425 (DQWHWDNIRE…YRENLLLSDS (69 aa)). Residues 363–784 (NIRETAAPVV…INELLKQKDV (422 aa)) form an interaction with PPP1R12A region. Residues 373–420 (PELSSDIDSSNFDDIEDDKGDVETFPIPKAFVGNQLPFIGFTYYRENL) form an interaction with NPM1 region. Thr-414 is subject to Phosphothreonine; by ROCK2. Coiled-coil stretches lie at residues 429 to 1024 (RETD…EKQL) and 1053 to 1131 (DTDV…IGLD). Positions 497 to 573 (ALRQLEREKA…LDETNALLRT (77 aa)) constitute an REM-1 domain. Phosphotyrosine; by SRC is present on Tyr-722. The RhoBD domain maps to 979–1047 (TSDVANLANE…LAEIMNRKEP (69 aa)). Residues 979 to 1047 (TSDVANLANE…LAEIMNRKEP (69 aa)) are RHOA binding. Residue Ser-1137 is modified to Phosphoserine. A PH domain is found at 1150–1349 (ESRLEGWLSL…WVSRLVKKIP (200 aa)). Thr-1212 carries the post-translational modification Phosphothreonine. The Phorbol-ester/DAG-type zinc-finger motif lies at 1260 to 1315 (GHEFIPTLYHFPTNCEACMKPLWHMFKPPPALECRRCHIKCHKDHMDKKEEIIAPC). The interval 1345-1388 (VKKIPKKPPAPDPFARSSPRTSMKIQQNQSIRRPSRQLAPNKPS) is disordered. Phosphoserine occurs at positions 1362 and 1374. Positions 1362–1376 (SPRTSMKIQQNQSIR) are enriched in polar residues.

It belongs to the protein kinase superfamily. AGC Ser/Thr protein kinase family. As to quaternary structure, homodimer. Interacts with IRS1. Interacts with RAF1. Interacts with RHOA (activated by GTP), RHOB and RHOC. Interacts with PPP1R12A. Interacts with EP300. Interacts with CHORDC1. Interacts with BRCA2. Interacts with NPM1; this interaction enhances ROCK2 activity. Interacts with SORL1. Interacts with PJVK. Requires Mg(2+) as cofactor. Phosphorylation at Tyr-722 reduces its binding to RHOA and is crucial for focal adhesion dynamics. Dephosphorylation by PTPN11 stimulates its RHOA binding activity. Post-translationally, cleaved by granzyme B during apoptosis. This leads to constitutive activation of the kinase and membrane blebbing. As to expression, expressed in the brain (at protein level).

It localises to the cytoplasm. The protein localises to the cell membrane. It is found in the nucleus. Its subcellular location is the cytoskeleton. The protein resides in the microtubule organizing center. It localises to the centrosome. It carries out the reaction L-seryl-[protein] + ATP = O-phospho-L-seryl-[protein] + ADP + H(+). The enzyme catalyses L-threonyl-[protein] + ATP = O-phospho-L-threonyl-[protein] + ADP + H(+). Its activity is regulated as follows. Activated by RHOA binding. Inhibited by Y-27632. Protein kinase which is a key regulator of actin cytoskeleton and cell polarity. Involved in regulation of smooth muscle contraction, actin cytoskeleton organization, stress fiber and focal adhesion formation, neurite retraction, cell adhesion and motility via phosphorylation of ADD1, BRCA2, CNN1, EZR, DPYSL2, EP300, MSN, MYL9/MLC2, NPM1, RDX, PPP1R12A and VIM. Phosphorylates SORL1 and IRF4. Acts as a negative regulator of VEGF-induced angiogenic endothelial cell activation. Positively regulates the activation of p42/MAPK1-p44/MAPK3 and of p90RSK/RPS6KA1 during myogenic differentiation. Plays an important role in the timely initiation of centrosome duplication. Inhibits keratinocyte terminal differentiation. May regulate closure of the eyelids and ventral body wall through organization of actomyosin bundles. Plays a critical role in the regulation of spine and synaptic properties in the hippocampus. Plays an important role in generating the circadian rhythm of the aortic myofilament Ca(2+) sensitivity and vascular contractility by modulating the myosin light chain phosphorylation. This is Rho-associated protein kinase 2 (ROCK2) from Homo sapiens (Human).